The sequence spans 84 residues: Acyl carrier protein (84 aa).

The 77-residue stretch at 4-80 folds into the Carrier domain; that stretch reads SETFEKVKKI…EAVDYINNQV (77 aa). S40 is subject to O-(pantetheine 4'-phosphoryl)serine.

It belongs to the acyl carrier protein (ACP) family. Post-translationally, 4'-phosphopantetheine is transferred from CoA to a specific serine of apo-ACP by AcpS. This modification is essential for activity because fatty acids are bound in thioester linkage to the sulfhydryl of the prosthetic group.

The protein resides in the cytoplasm. It participates in lipid metabolism; fatty acid biosynthesis. Functionally, carrier of the growing fatty acid chain in fatty acid biosynthesis. The chain is Acyl carrier protein from Nostoc sp. (strain PCC 7120 / SAG 25.82 / UTEX 2576).